A 55-amino-acid chain; its full sequence is UPF0434 protein BARBAKC583_1098 (55 aa).

This sequence belongs to the UPF0434 family.

This chain is UPF0434 protein BARBAKC583_1098, found in Bartonella bacilliformis (strain ATCC 35685 / KC583 / Herrer 020/F12,63).